The following is a 253-amino-acid chain: Isopentenyl-diphosphate delta-isomerase IDI1 (253 aa).

Lysine 61 serves as a coordination point for substrate. Mg(2+) contacts are provided by histidine 65 and histidine 76. The region spanning 74-224 is the Nudix hydrolase domain; it reads LLHRAFSVFL…SLVFTPWFKL (151 aa). 2 residues coordinate substrate: glutamine 94 and lysine 99. The active site involves cysteine 111. Serine 112 contributes to the substrate binding site. Residues 112 to 145 carry the Nudix box motif; it reads SHPLHIPTETGSTLEDSIAGVKRAAQRKLEHELG. Positions 174 and 176 each coordinate Mg(2+). Glutamate 176 is a catalytic residue.

The protein belongs to the IPP isomerase type 1 family. Requires Mg(2+) as cofactor.

The enzyme catalyses isopentenyl diphosphate = dimethylallyl diphosphate. Its pathway is isoprenoid biosynthesis; dimethylallyl diphosphate biosynthesis; dimethylallyl diphosphate from isopentenyl diphosphate: step 1/1. Its function is as follows. Isopentenyl-diphosphate delta-isomerase; part of the second module of ergosterol biosynthesis pathway that includes the middle steps of the pathway. IDI1 catalyzes the 1,3-allylic rearrangement of isopentenyl (IPP) to its highly electrophilic allylic isomer, dimethylallyl diphosphate (DMAPP). The second module is carried out in the vacuole and involves the formation of farnesyl diphosphate, which is also an important intermediate in the biosynthesis of ubiquinone, dolichol, heme and prenylated proteins. Activity by the mevalonate kinase ERG12 (FG05912) first converts mevalonate into 5-phosphomevalonate. 5-phosphomevalonate is then further converted to 5-diphosphomevalonate by the phosphomevalonate kinase ERG8 (FG09764). The diphosphomevalonate decarboxylase ERG19 (FG10424) then produces isopentenyl diphosphate. The isopentenyl-diphosphate delta-isomerase IDI1 (FG09722) then catalyzes the 1,3-allylic rearrangement of the homoallylic substrate isopentenyl (IPP) to its highly electrophilic allylic isomer, dimethylallyl diphosphate (DMAPP). Finally the farnesyl diphosphate synthase ERG20 (FG06784) catalyzes the sequential condensation of isopentenyl pyrophosphate with dimethylallyl pyrophosphate, and then with the resultant geranylpyrophosphate to the ultimate product farnesyl pyrophosphate. This chain is Isopentenyl-diphosphate delta-isomerase IDI1, found in Gibberella zeae (strain ATCC MYA-4620 / CBS 123657 / FGSC 9075 / NRRL 31084 / PH-1) (Wheat head blight fungus).